The chain runs to 257 residues: Imidazole glycerol phosphate synthase subunit HisF (257 aa).

Active-site residues include Asp-11 and Asp-130.

The protein belongs to the HisA/HisF family. In terms of assembly, heterodimer of HisH and HisF.

It is found in the cytoplasm. It carries out the reaction 5-[(5-phospho-1-deoxy-D-ribulos-1-ylimino)methylamino]-1-(5-phospho-beta-D-ribosyl)imidazole-4-carboxamide + L-glutamine = D-erythro-1-(imidazol-4-yl)glycerol 3-phosphate + 5-amino-1-(5-phospho-beta-D-ribosyl)imidazole-4-carboxamide + L-glutamate + H(+). Its pathway is amino-acid biosynthesis; L-histidine biosynthesis; L-histidine from 5-phospho-alpha-D-ribose 1-diphosphate: step 5/9. Its function is as follows. IGPS catalyzes the conversion of PRFAR and glutamine to IGP, AICAR and glutamate. The HisF subunit catalyzes the cyclization activity that produces IGP and AICAR from PRFAR using the ammonia provided by the HisH subunit. This Shewanella piezotolerans (strain WP3 / JCM 13877) protein is Imidazole glycerol phosphate synthase subunit HisF.